Reading from the N-terminus, the 175-residue chain is UPF0398 protein SPP_0409 (175 aa).

This sequence belongs to the UPF0398 family.

This chain is UPF0398 protein SPP_0409, found in Streptococcus pneumoniae (strain P1031).